Here is a 383-residue protein sequence, read N- to C-terminus: Glucose-1-phosphate adenylyltransferase (383 aa).

Alpha-D-glucose 1-phosphate contacts are provided by residues tyrosine 100, glycine 165, 180-181 (EK), and serine 191.

It belongs to the bacterial/plant glucose-1-phosphate adenylyltransferase family. Homotetramer.

The enzyme catalyses alpha-D-glucose 1-phosphate + ATP + H(+) = ADP-alpha-D-glucose + diphosphate. It participates in glycan biosynthesis; glycogen biosynthesis. Its function is as follows. Involved in the biosynthesis of ADP-glucose, a building block required for the elongation reactions to produce glycogen. Catalyzes the reaction between ATP and alpha-D-glucose 1-phosphate (G1P) to produce pyrophosphate and ADP-Glc. This chain is Glucose-1-phosphate adenylyltransferase, found in Clostridium kluyveri (strain ATCC 8527 / DSM 555 / NBRC 12016 / NCIMB 10680 / K1).